The sequence spans 344 residues: MEIRIMLFILMMMVMPVSYAACYSELSVQHNLVVQGDFALTQTQMATYEHNFNDSSCVSTNTITPMSPSDIIVGLYNDTIKLNLHFEWTNKNNITLSNNQTSFTSGYSVTVTPAASNAKVNVSAGGGGSVMINGVATLSSASSSTRGSAAVQFLLCLLGGKSWDACVNSYRNALAQNAGVYSFNLTLSYNPITTTCKPDDLLITLDSIPVSQLPATGNKATINSKQGDIILRCKNLLGQQNQTSRKMQVYLSSSDLLTNSNTILKGAEDNGVGFILESNGSPVTLLNITNSSKGYTNLKEVAAKSKLTDTTVSIPITASYYVYDTNKVKSGALEATALINVKYD.

The N-terminal stretch at 1-20 is a signal peptide; that stretch reads MEIRIMLFILMMMVMPVSYA.

The protein belongs to the fimbrial protein family.

Functionally, part of the yehABCD fimbrial operon. Could contribute to adhesion to various surfaces in specific environmental niches. This is an uncharacterized protein from Escherichia coli (strain K12).